An 87-amino-acid chain; its full sequence is Small ribosomal subunit protein uS17 (87 aa).

Belongs to the universal ribosomal protein uS17 family. As to quaternary structure, part of the 30S ribosomal subunit.

In terms of biological role, one of the primary rRNA binding proteins, it binds specifically to the 5'-end of 16S ribosomal RNA. This Bacillus mycoides (strain KBAB4) (Bacillus weihenstephanensis) protein is Small ribosomal subunit protein uS17.